Consider the following 284-residue polypeptide: Citrate lyase subunit beta-like protein (284 aa).

Substrate-binding residues include Arg74 and Glu129. Positions 129 and 155 each coordinate Mg(2+).

This sequence belongs to the HpcH/HpaI aldolase family. Citrate lyase beta subunit-like subfamily. As to quaternary structure, homotrimer. Requires Mg(2+) as cofactor.

May play a role in fatty acid biosynthesis. The sequence is that of Citrate lyase subunit beta-like protein from Deinococcus radiodurans (strain ATCC 13939 / DSM 20539 / JCM 16871 / CCUG 27074 / LMG 4051 / NBRC 15346 / NCIMB 9279 / VKM B-1422 / R1).